A 151-amino-acid chain; its full sequence is Large ribosomal subunit protein bL9 (151 aa).

This sequence belongs to the bacterial ribosomal protein bL9 family.

Binds to the 23S rRNA. The chain is Large ribosomal subunit protein bL9 from Francisella tularensis subsp. tularensis (strain FSC 198).